Here is a 230-residue protein sequence, read N- to C-terminus: Complex I assembly factor TMEM126B, mitochondrial (230 aa).

4 helical membrane-spanning segments follow: residues 70-92, 107-126, 139-161, and 196-218; these read LNIHGTLVFGTSSSLSGIMANLV, YASLTTLPVLATIVSYKLFV, SCVLRSALIGMACGVSYPSALAF, and AMAIPLFFQIVMGAFTGLHHYNI.

This sequence belongs to the TMEM126 family. As to quaternary structure, part of the mitochondrial complex I assembly/MCIA complex that comprises at least the core subunits TMEM126B, NDUFAF1, ECSIT and ACAD9 and complement subunits such as COA1 and TMEM186. Associates with the intermediate 370 kDa subcomplex of incompletely assembled complex I. Interacts with TMEM70.

It localises to the mitochondrion membrane. Its function is as follows. As part of the MCIA complex, involved in the assembly of the mitochondrial complex I. Participates in constructing the membrane arm of complex I. In Mus musculus (Mouse), this protein is Complex I assembly factor TMEM126B, mitochondrial.